Reading from the N-terminus, the 250-residue chain is N-acyl homoserine lactonase (250 aa).

His104, His106, Asp108, His109, His169, Asp191, and His235 together coordinate Zn(2+).

It belongs to the metallo-beta-lactamase superfamily. In terms of assembly, monomer. It depends on Zn(2+) as a cofactor.

It carries out the reaction an N-acyl-L-homoserine lactone + H2O = an N-acyl-L-homoserine + H(+). The sequence is that of N-acyl homoserine lactonase from Bacillus cereus.